Reading from the N-terminus, the 67-residue chain is MMSKLGVLLTICLLLFPLSVLPLDGDQLADQPARHAQSAERNARFHPVKRCCPFPMCYQVPHCPCCG.

Residues 1-22 form the signal peptide; that stretch reads MMSKLGVLLTICLLLFPLSVLP. A propeptide spanning residues 23-50 is cleaved from the precursor; sequence LDGDQLADQPARHAQSAERNARFHPVKR. 3 disulfides stabilise this stretch: cysteine 51-cysteine 65, cysteine 52-cysteine 63, and cysteine 57-cysteine 66. A Cysteine amide modification is found at cysteine 66.

It belongs to the conotoxin M superfamily. In terms of tissue distribution, expressed by the venom duct.

It is found in the secreted. This Conus regius (Crown cone) protein is Conotoxin reg3.8.